The chain runs to 234 residues: 2,3,4,5-tetrahydropyridine-2,6-dicarboxylate N-acetyltransferase (234 aa).

This sequence belongs to the transferase hexapeptide repeat family. DapH subfamily.

The enzyme catalyses (S)-2,3,4,5-tetrahydrodipicolinate + acetyl-CoA + H2O = L-2-acetamido-6-oxoheptanedioate + CoA. It functions in the pathway amino-acid biosynthesis; L-lysine biosynthesis via DAP pathway; LL-2,6-diaminopimelate from (S)-tetrahydrodipicolinate (acetylase route): step 1/3. Catalyzes the transfer of an acetyl group from acetyl-CoA to tetrahydrodipicolinate. This Lacticaseibacillus paracasei (strain ATCC 334 / BCRC 17002 / CCUG 31169 / CIP 107868 / KCTC 3260 / NRRL B-441) (Lactobacillus paracasei) protein is 2,3,4,5-tetrahydropyridine-2,6-dicarboxylate N-acetyltransferase.